The chain runs to 115 residues: MNLMITLLTNTMLTSLMVLIAFWLPQTYNYSEKTSPYECGFDPVGSARLPFSMKFFLVAITFLLFDLEIALLLPLPWAIQANNTSLTLLMSFMLIILLAIGLAYEWLQKGLEWTK.

Transmembrane regions (helical) follow at residues 3 to 23 (LMIT…IAFW), 55 to 75 (FFLV…LLPL), and 86 to 106 (LTLL…AYEW).

Belongs to the complex I subunit 3 family. In terms of assembly, core subunit of respiratory chain NADH dehydrogenase (Complex I) which is composed of 45 different subunits. Interacts with TMEM186. Interacts with TMEM242.

It localises to the mitochondrion inner membrane. It catalyses the reaction a ubiquinone + NADH + 5 H(+)(in) = a ubiquinol + NAD(+) + 4 H(+)(out). Its function is as follows. Core subunit of the mitochondrial membrane respiratory chain NADH dehydrogenase (Complex I) which catalyzes electron transfer from NADH through the respiratory chain, using ubiquinone as an electron acceptor. Essential for the catalytic activity of complex I. The chain is NADH-ubiquinone oxidoreductase chain 3 from Loxodonta africana (African elephant).